A 189-amino-acid chain; its full sequence is HGPRTase-like protein 2 (189 aa).

The protein belongs to the purine/pyrimidine phosphoribosyltransferase family. Archaeal HPRT subfamily.

In terms of biological role, may catalyze a purine salvage reaction, the substrate is unknown. This chain is HGPRTase-like protein 2, found in Haloarcula marismortui (strain ATCC 43049 / DSM 3752 / JCM 8966 / VKM B-1809) (Halobacterium marismortui).